The primary structure comprises 668 residues: tRNA 5-methylaminomethyl-2-thiouridine biosynthesis bifunctional protein MnmC (668 aa).

Positions 1 to 245 (MKHYSIQPAN…KREMLCGVME (245 aa)) are tRNA (mnm(5)s(2)U34)-methyltransferase. Residues 270–668 (IGGGIASALL…LLKGKAVKAG (399 aa)) form an FAD-dependent cmnm(5)s(2)U34 oxidoreductase region.

In the N-terminal section; belongs to the methyltransferase superfamily. tRNA (mnm(5)s(2)U34)-methyltransferase family. It in the C-terminal section; belongs to the DAO family. The cofactor is FAD.

It is found in the cytoplasm. It catalyses the reaction 5-aminomethyl-2-thiouridine(34) in tRNA + S-adenosyl-L-methionine = 5-methylaminomethyl-2-thiouridine(34) in tRNA + S-adenosyl-L-homocysteine + H(+). Functionally, catalyzes the last two steps in the biosynthesis of 5-methylaminomethyl-2-thiouridine (mnm(5)s(2)U) at the wobble position (U34) in tRNA. Catalyzes the FAD-dependent demodification of cmnm(5)s(2)U34 to nm(5)s(2)U34, followed by the transfer of a methyl group from S-adenosyl-L-methionine to nm(5)s(2)U34, to form mnm(5)s(2)U34. The protein is tRNA 5-methylaminomethyl-2-thiouridine biosynthesis bifunctional protein MnmC of Escherichia coli O6:H1 (strain CFT073 / ATCC 700928 / UPEC).